A 152-amino-acid chain; its full sequence is Neuromedin-S (152 aa).

Residues 1 to 26 form the signal peptide; sequence MKHPFPQFPPILVIYCFCMLQIPSSG. Propeptides lie at residues 27–69, 70–105, and 106–108; these read ASPP…VYKR, FLFH…PSRR, and MKR. Asn144 bears the Asparagine amide mark. Positions 147 to 152 are excised as a propeptide; that stretch reads YTDKVQ.

It belongs to the NmU family. In terms of tissue distribution, expressed in the CNS, spleen and testis. Specifically expressed in the suprachiasmatic nuclei (SCN) of the hypothalamus.

The protein localises to the secreted. Functionally, implicated in the regulation of circadian rhythms through autocrine and/or paracrine actions. Stimulates the contraction of rectum and elevation of blood pressure. The sequence is that of Neuromedin-S (Nms) from Rattus norvegicus (Rat).